A 142-amino-acid polypeptide reads, in one-letter code: Large ribosomal subunit protein uL11 (142 aa).

The protein belongs to the universal ribosomal protein uL11 family. Part of the ribosomal stalk of the 50S ribosomal subunit. Interacts with L10 and the large rRNA to form the base of the stalk. L10 forms an elongated spine to which L12 dimers bind in a sequential fashion forming a multimeric L10(L12)X complex. One or more lysine residues are methylated.

Functionally, forms part of the ribosomal stalk which helps the ribosome interact with GTP-bound translation factors. The chain is Large ribosomal subunit protein uL11 from Nitrobacter winogradskyi (strain ATCC 25391 / DSM 10237 / CIP 104748 / NCIMB 11846 / Nb-255).